The sequence spans 146 residues: Hemoglobin subunit beta (146 aa).

A Globin domain is found at 2–146 (HWTAEEKQLI…VAHALARKYH (145 aa)). Heme b contacts are provided by H63 and H92.

It belongs to the globin family. As to quaternary structure, heterotetramer of two alpha chains and two beta chains. In terms of tissue distribution, red blood cells.

Functionally, involved in oxygen transport from the lung to the various peripheral tissues. The protein is Hemoglobin subunit beta (HBB) of Phalacrocorax carbo (Great cormorant).